The following is a 156-amino-acid chain: Small ribosomal subunit protein uS7 (156 aa).

It belongs to the universal ribosomal protein uS7 family. Part of the 30S ribosomal subunit. Contacts proteins S9 and S11.

Functionally, one of the primary rRNA binding proteins, it binds directly to 16S rRNA where it nucleates assembly of the head domain of the 30S subunit. Is located at the subunit interface close to the decoding center, probably blocks exit of the E-site tRNA. This Shigella dysenteriae serotype 1 (strain Sd197) protein is Small ribosomal subunit protein uS7.